The primary structure comprises 475 residues: Ribulose bisphosphate carboxylase large chain (475 aa).

Positions methionine 1 to serine 2 are excised as a propeptide. An N-acetylproline modification is found at proline 3. Lysine 14 bears the N6,N6,N6-trimethyllysine mark. The substrate site is built by asparagine 123 and threonine 173. Lysine 175 acts as the Proton acceptor in catalysis. Position 177 (lysine 177) interacts with substrate. Lysine 201, aspartate 203, and glutamate 204 together coordinate Mg(2+). The residue at position 201 (lysine 201) is an N6-carboxylysine. The active-site Proton acceptor is histidine 294. Positions 295, 327, and 379 each coordinate substrate.

It belongs to the RuBisCO large chain family. Type I subfamily. In terms of assembly, heterohexadecamer of 8 large chains and 8 small chains; disulfide-linked. The disulfide link is formed within the large subunit homodimers. It depends on Mg(2+) as a cofactor. The disulfide bond which can form in the large chain dimeric partners within the hexadecamer appears to be associated with oxidative stress and protein turnover.

It localises to the plastid. It is found in the chloroplast. It carries out the reaction 2 (2R)-3-phosphoglycerate + 2 H(+) = D-ribulose 1,5-bisphosphate + CO2 + H2O. The catalysed reaction is D-ribulose 1,5-bisphosphate + O2 = 2-phosphoglycolate + (2R)-3-phosphoglycerate + 2 H(+). RuBisCO catalyzes two reactions: the carboxylation of D-ribulose 1,5-bisphosphate, the primary event in carbon dioxide fixation, as well as the oxidative fragmentation of the pentose substrate in the photorespiration process. Both reactions occur simultaneously and in competition at the same active site. In Staurastrum punctulatum (Green alga), this protein is Ribulose bisphosphate carboxylase large chain.